Reading from the N-terminus, the 441-residue chain is Eukaryotic translation initiation factor 3 subunit E (441 aa).

The region spanning 223-407 is the PCI domain; it reads IFFNHDNGRT…GTVIMEPTQP (185 aa).

It belongs to the eIF-3 subunit E family. As to quaternary structure, component of the eukaryotic translation initiation factor 3 (eIF-3) complex (Potential). Binds to the translation initiation factors TIF3F1 and TIF3H1. Associates with the CSN (COP9 signalosome) complex. Interacts directly with CSN1, CSN4, CSN6A, CSN6B, CSN7, CSN8 and TIF3C1. Binds to 40S small ribosomal subunit S9 (RPS9B and RPS9C) via its N-terminal part. Interacts with the 26S proteasome subunit RPN12a via its C-terminal part. Also binds with At1g27930 and At4g30620.

The protein resides in the cytoplasm. The protein localises to the nucleus. Functionally, component of the eukaryotic translation initiation factor 3 (eIF-3) complex, which is involved in protein synthesis of a specialized repertoire of mRNAs and, together with other initiation factors, stimulates binding of mRNA and methionyl-tRNAi to the 40S ribosome. The eIF-3 complex specifically targets and initiates translation of a subset of mRNAs involved in cell proliferation (Potential). Negatively regulates translation during flower development. This Arabidopsis thaliana (Mouse-ear cress) protein is Eukaryotic translation initiation factor 3 subunit E.